The sequence spans 465 residues: UDP-glycosyltransferase 89A2 (465 aa).

UDP-alpha-D-glucose is bound by residues serine 291, 342–344 (VSQ), 359–367 (HCGWNSVLE), and 381–384 (EADQ).

Belongs to the UDP-glycosyltransferase family.

Its function is as follows. Glucosyltransferase that glucosylates benzoates and benzoate derivatives in vitro. This is UDP-glycosyltransferase 89A2 (UGT89A2) from Arabidopsis thaliana (Mouse-ear cress).